Reading from the N-terminus, the 292-residue chain is Protease HtpX (292 aa).

2 helical membrane-spanning segments follow: residues 5 to 25 (IFLF…VMSL) and 34 to 54 (SGLL…SLLL). Histidine 140 contributes to the Zn(2+) binding site. The active site involves glutamate 141. Zn(2+) is bound at residue histidine 144. A run of 2 helical transmembrane segments spans residues 155–175 (LLQG…GGII) and 193–213 (IIVF…AMWF). Glutamate 218 is a binding site for Zn(2+).

The protein belongs to the peptidase M48B family. It depends on Zn(2+) as a cofactor.

Its subcellular location is the cell inner membrane. The sequence is that of Protease HtpX from Xanthomonas euvesicatoria pv. vesicatoria (strain 85-10) (Xanthomonas campestris pv. vesicatoria).